A 1127-amino-acid chain; its full sequence is Inactive phospholipase C-like protein 2 (1127 aa).

Residues 1-11 show a composition bias toward gly residues; it reads MAECGRGGAAG. Residues 1–128 form a disordered region; sequence MAECGRGGAA…KKTVSFSSMP (128 aa). Position 2 is an N-acetylalanine (Ala2). Ser17 carries the post-translational modification Phosphoserine. Residues 19–31 are compositionally biased toward low complexity; the sequence is GPALGAKGALKAG. Residues 32–42 show a composition bias toward gly residues; that stretch reads VGEGGGGGGRL. Thr84 is subject to Phosphothreonine. Positions 141–251 constitute a PH domain; sequence NSMVEGSELK…WVTGLRYLIS (111 aa). The 145-residue stretch at 426 to 570 folds into the PI-PLC X-box domain; it reads QDMKQPLSHY…LKGKILIKAK (145 aa). Thr584 bears the Phosphothreonine mark. A PI-PLC Y-box domain is found at 618 to 734; the sequence is LSELVSICKS…GYVLRPAIMR (117 aa). Residues 734–863 enclose the C2 domain; sequence REEVSFFSAN…TGYRHVPLQS (130 aa). Residues 1101 to 1127 form a disordered region; the sequence is GTENADVQKPRRSLEVIPEKANDETGE. Basic and acidic residues predominate over residues 1106–1127; that stretch reads DVQKPRRSLEVIPEKANDETGE. Phosphoserine is present on Ser1113.

It is found in the cytoplasm. In terms of biological role, may play an role in the regulation of Ins(1,4,5)P3 around the endoplasmic reticulum. The polypeptide is Inactive phospholipase C-like protein 2 (PLCL2) (Homo sapiens (Human)).